The sequence spans 396 residues: MAKSKFERTKPHVNVGTIGHVDHGKTTLTAAITTVLSSKFGGEAKAYDQIDAAPEEKARGITINTAHVEYETANRHYAHVDCPGHADYVKNMITGAAQMDGAILVVSAADGPMPQTREHILLARQVGVPYIIVFLNKCDMVDDAELLELVEMEVRELLSKYDFPGDDTPIIKGSAKLALEGDKGELGEGAILKLAEALDTYIPTPERAVDGAFLMPVEDVFSISGRGTVVTGRVERGIIKVGEEIEIVGLKPTLKTTCTGVEMFRKLLDQGQAGDNVGILLRGTKREEVERGQVLCKPGSIKPHTHFTAEVYVLSKDEGGRHTPFFNNYRPQFYFRTTDVTGAIELPKDKEMVMPGDNVSITVKLIAPIAMEEGLRFAIREGGRTVGAGVVAKIIE.

Residues 10–206 enclose the tr-type G domain; that stretch reads KPHVNVGTIG…ALDTYIPTPE (197 aa). Positions 19-26 are G1; the sequence is GHVDHGKT. Residue 19–26 participates in GTP binding; the sequence is GHVDHGKT. T26 lines the Mg(2+) pocket. Residues 60–64 are G2; the sequence is GITIN. The interval 81 to 84 is G3; it reads DCPG. Residues 81–85 and 136–139 contribute to the GTP site; these read DCPGH and NKCD. Residues 136–139 are G4; that stretch reads NKCD. The segment at 174–176 is G5; sequence SAK.

It belongs to the TRAFAC class translation factor GTPase superfamily. Classic translation factor GTPase family. EF-Tu/EF-1A subfamily. Monomer.

Its subcellular location is the cytoplasm. It catalyses the reaction GTP + H2O = GDP + phosphate + H(+). In terms of biological role, GTP hydrolase that promotes the GTP-dependent binding of aminoacyl-tRNA to the A-site of ribosomes during protein biosynthesis. The sequence is that of Elongation factor Tu from Thiomonas delicata (Thiomonas cuprina).